Consider the following 319-residue polypeptide: Ribonuclease Z (319 aa).

7 residues coordinate Zn(2+): His62, His64, Asp66, His67, His145, Asp215, and His273. The active-site Proton acceptor is Asp66.

This sequence belongs to the RNase Z family. In terms of assembly, homodimer. The cofactor is Zn(2+).

The catalysed reaction is Endonucleolytic cleavage of RNA, removing extra 3' nucleotides from tRNA precursor, generating 3' termini of tRNAs. A 3'-hydroxy group is left at the tRNA terminus and a 5'-phosphoryl group is left at the trailer molecule.. Zinc phosphodiesterase, which displays some tRNA 3'-processing endonuclease activity. Probably involved in tRNA maturation, by removing a 3'-trailer from precursor tRNA. The protein is Ribonuclease Z of Borreliella burgdorferi (strain ATCC 35210 / DSM 4680 / CIP 102532 / B31) (Borrelia burgdorferi).